Consider the following 159-residue polypeptide: Transcriptional repressor NrdR (159 aa).

Positions 1-22 (MRCPFCGSEDTQVKDSRPAEDN) are disordered. Residues 3–34 (CPFCGSEDTQVKDSRPAEDNTSIRRRRICPDC) fold into a zinc finger. The segment covering 11-22 (TQVKDSRPAEDN) has biased composition (basic and acidic residues). In terms of domain architecture, ATP-cone spans 49–139 (LMVIKKSGRK…VYRDFSHAED (91 aa)).

It belongs to the NrdR family. The cofactor is Zn(2+).

In terms of biological role, negatively regulates transcription of bacterial ribonucleotide reductase nrd genes and operons by binding to NrdR-boxes. The protein is Transcriptional repressor NrdR of Agrobacterium fabrum (strain C58 / ATCC 33970) (Agrobacterium tumefaciens (strain C58)).